A 219-amino-acid chain; its full sequence is Lipoprotein-releasing system ATP-binding protein LolD (219 aa).

One can recognise an ABC transporter domain in the interval 3–219 (IEARNIRKSF…HMRDGLLFSE (217 aa)). 35–42 (GTSGAGKT) provides a ligand contact to ATP.

This sequence belongs to the ABC transporter superfamily. Lipoprotein translocase (TC 3.A.1.125) family. The complex is composed of two ATP-binding proteins (LolD) and two transmembrane proteins (LolC and LolE).

The protein resides in the cell inner membrane. In terms of biological role, part of the ABC transporter complex LolCDE involved in the translocation of mature outer membrane-directed lipoproteins, from the inner membrane to the periplasmic chaperone, LolA. Responsible for the formation of the LolA-lipoprotein complex in an ATP-dependent manner. The sequence is that of Lipoprotein-releasing system ATP-binding protein LolD from Porphyromonas gingivalis (strain ATCC BAA-308 / W83).